A 194-amino-acid polypeptide reads, in one-letter code: Holliday junction branch migration complex subunit RuvA (194 aa).

The tract at residues 1–64 (MIGRLRGILA…EDSVSLYGFL (64 aa)) is domain I. The interval 65-140 (REGERRLFRD…RAADFSSGAP (76 aa)) is domain II. The segment at 140–144 (PITGQ) is flexible linker. The segment at 145 to 194 (LGPDAVSEATVALQQLGYKPAEAARMARDAGAEGDEVATVIRKALQAALR) is domain III.

The protein belongs to the RuvA family. As to quaternary structure, homotetramer. Forms an RuvA(8)-RuvB(12)-Holliday junction (HJ) complex. HJ DNA is sandwiched between 2 RuvA tetramers; dsDNA enters through RuvA and exits via RuvB. An RuvB hexamer assembles on each DNA strand where it exits the tetramer. Each RuvB hexamer is contacted by two RuvA subunits (via domain III) on 2 adjacent RuvB subunits; this complex drives branch migration. In the full resolvosome a probable DNA-RuvA(4)-RuvB(12)-RuvC(2) complex forms which resolves the HJ.

The protein localises to the cytoplasm. Its function is as follows. The RuvA-RuvB-RuvC complex processes Holliday junction (HJ) DNA during genetic recombination and DNA repair, while the RuvA-RuvB complex plays an important role in the rescue of blocked DNA replication forks via replication fork reversal (RFR). RuvA specifically binds to HJ cruciform DNA, conferring on it an open structure. The RuvB hexamer acts as an ATP-dependent pump, pulling dsDNA into and through the RuvAB complex. HJ branch migration allows RuvC to scan DNA until it finds its consensus sequence, where it cleaves and resolves the cruciform DNA. The sequence is that of Holliday junction branch migration complex subunit RuvA from Xanthomonas axonopodis pv. citri (strain 306).